A 200-amino-acid polypeptide reads, in one-letter code: GTP cyclohydrolase 1 (200 aa).

Residues cysteine 87, histidine 90, and cysteine 158 each coordinate Zn(2+).

Belongs to the GTP cyclohydrolase I family. As to quaternary structure, toroid-shaped homodecamer, composed of two pentamers of five dimers.

The catalysed reaction is GTP + H2O = 7,8-dihydroneopterin 3'-triphosphate + formate + H(+). It participates in cofactor biosynthesis; 7,8-dihydroneopterin triphosphate biosynthesis; 7,8-dihydroneopterin triphosphate from GTP: step 1/1. This is GTP cyclohydrolase 1 from Xanthomonas axonopodis pv. citri (strain 306).